The sequence spans 245 residues: Uridylate kinase (245 aa).

15 to 18 is a binding site for ATP; sequence KLSG. Residues 23–28 are involved in allosteric activation by GTP; it reads GEEGFG. Gly57 contacts UMP. Residues Gly58 and Arg62 each contribute to the ATP site. Residues Asp77 and 138–145 each bind UMP; that span reads TGNPFCTT. ATP is bound by residues Thr165, Tyr171, and Asp174.

It belongs to the UMP kinase family. In terms of assembly, homohexamer.

The protein localises to the cytoplasm. The enzyme catalyses UMP + ATP = UDP + ADP. It functions in the pathway pyrimidine metabolism; CTP biosynthesis via de novo pathway; UDP from UMP (UMPK route): step 1/1. Allosterically activated by GTP. Inhibited by UTP. Functionally, catalyzes the reversible phosphorylation of UMP to UDP. This chain is Uridylate kinase, found in Shewanella putrefaciens (strain CN-32 / ATCC BAA-453).